The chain runs to 57 residues: Sec-independent protein translocase protein TatAy (57 aa).

Residues 1 to 21 form a helical membrane-spanning segment; that stretch reads MPIGPGSLAVIAIVALIIFGP.

It belongs to the TatA/E family. In terms of assembly, forms a complex with TatCy. Two types of complexes exist: one composed of TatAy and TatCy, and another composed only of TatAy. Cytosolic TatA forms large complexes or aggregates.

It is found in the cell membrane. Its subcellular location is the cytoplasm. The protein localises to the cytosol. Part of the twin-arginine translocation (Tat) system that transports large folded proteins containing a characteristic twin-arginine motif in their signal peptide across membranes. TatA could form the protein-conducting channel of the Tat system. Required for YwbN secretion. The polypeptide is Sec-independent protein translocase protein TatAy (Bacillus subtilis (strain 168)).